A 1133-amino-acid polypeptide reads, in one-letter code: Protein cordon-bleu (1133 aa).

Residues 1 to 11 (MKARAPPPPGK) are compositionally biased toward pro residues. The interval 1–25 (MKARAPPPPGKPAAQNVHSEQKLPH) is disordered. Residues serine 31, serine 34, serine 196, serine 219, serine 256, and serine 278 each carry the phosphoserine modification. 2 disordered regions span residues 246 to 393 (AEHL…SVNG) and 442 to 568 (QGGI…GQAS). The segment covering 272–301 (CVTTPNSPSLHSRSLTLGPSLSLGNISGMS) has biased composition (polar residues). Positions 307–312 (KKRRAP) match the KKRRAP 1 motif. Serine 330 and serine 333 each carry phosphoserine. The KKRRAP 2 signature appears at 340–345 (KKRRAP). Positions 345-358 (PAPPPPQPPPPSPV) are enriched in pro residues. Serine 356 is modified (phosphoserine). The span at 361-371 (NRKEDKEENRK) shows a compositional bias: basic and acidic residues. 2 stretches are compositionally biased toward polar residues: residues 382–393 (TDTSSLTSSVNG) and 442–464 (QGGI…QPFI). Phosphoserine is present on serine 447. A compositionally biased stretch (basic and acidic residues) spans 512–524 (STDDPKAKDKDKM). Residue serine 614 is modified to Phosphoserine. A disordered region spans residues 664-720 (APSTTITATSEKPQRDETKAGFTLTTPEQQPASQEYGAPPEEDRSRPHSAVSCPVKV). 2 stretches are compositionally biased toward polar residues: residues 665–674 (PSTTITATSE) and 686–696 (TLTTPEQQPAS). A Phosphoserine modification is found at serine 924. 2 disordered regions span residues 942 to 961 (PSPL…SSIF) and 990 to 1018 (HTSG…YVEA). 2 consecutive WH2 domains span residues 981 to 1001 (LHSA…LRKT) and 1021 to 1041 (ERSA…LRKV). Residues 993–1010 (GGRDKLRKTAEQASEGRP) are compositionally biased toward basic and acidic residues. Residues 1063 to 1091 (DKPQQEDRGLPPPPALPPPSTPASQVPSA) are disordered. The segment covering 1072–1083 (LPPPPALPPPST) has biased composition (pro residues). Phosphoserine is present on serine 1099. The WH2 3 domain occupies 1109–1129 (ARQALMDAIRSGTGAARLRKV).

In terms of assembly, identified in a complex composed of ACTA1, COBL, GSN AND TMSB4X. Identified in a complex composed of COBL, PACSIN1 and WASL. Interacts with PACSIN1, PACSIN2 and PACSIN3. Interacts (via WH2 domains) with actin monomers. Interacts with both PACSIN1 and DBNL. As to expression, detected in brain (at protein level).

Its subcellular location is the cell membrane. It is found in the cytoplasm. It localises to the cytoskeleton. The protein localises to the cell projection. The protein resides in the ruffle. Its subcellular location is the cytosol. Functionally, plays an important role in the reorganization of the actin cytoskeleton. Binds to and sequesters actin monomers (G actin). Nucleates actin polymerization by assembling three actin monomers in cross-filament orientation and thereby promotes growth of actin filaments at the barbed end. Can also mediate actin depolymerization at barbed ends and severing of actin filaments. Promotes formation of cell ruffles. Regulates dendrite branching in Purkinje cells. Regulates neuron morphogenesis and increases branching of axons and dendrites. The polypeptide is Protein cordon-bleu (Cobl) (Rattus norvegicus (Rat)).